Reading from the N-terminus, the 464-residue chain is Rhodopsin (464 aa).

The Extracellular segment spans residues 1–33 (MGRDIPDNETWWYNPTMEVHPHWKQFNQVPDAV). The N-linked (GlcNAc...) asparagine glycan is linked to Asn8. Residues 34 to 58 (YYSLGIFIGICGIIGCTGNGIVIYL) traverse the membrane as a helical segment. Residues 59–70 (FTKTKSLQTPAN) are Cytoplasmic-facing. The chain crosses the membrane as a helical span at residues 71–97 (MFIINLAFSDFTFSLVNGFPLMTISCF). Topologically, residues 98-109 (IKKWVFGMAACK) are extracellular. Cys108 and Cys186 are joined by a disulfide. The chain crosses the membrane as a helical span at residues 110–131 (VYGFIGGIFGLMSIMTMSMISI). The short motif at 132 to 134 (DRY) is the 'Ionic lock' involved in activated form stabilization element. Residues 132-151 (DRYNVIGRPMAASKKMSHRR) lie on the Cytoplasmic side of the membrane. The chain crosses the membrane as a helical span at residues 152 to 172 (AFLMIIFVWMWSTLWSIGPIF). At 173 to 199 (GWGAYVLEGVLCNCSFDYITRDSATRS) the chain is on the extracellular side. The helical transmembrane segment at 200-224 (NIVCMYIFAFCFPILIIFFCYFNIV) threads the bilayer. Residues 225-261 (MAVSNHEKEMAAMAKRLNAKELRKAQAGASAEMKLAK) are Cytoplasmic-facing. A helical membrane pass occupies residues 262 to 283 (ISIVIVTQFLLSWSPYAVVALL). The Extracellular segment spans residues 284 to 293 (AQFGPIEWVT). Residues 294 to 315 (PYAAQLPVMFAKASAIHNPLIY) form a helical membrane-spanning segment. Residue Lys305 is modified to N6-(retinylidene)lysine. The Cytoplasmic segment spans residues 316 to 464 (SVSHPKFREA…QGVDNQAYQA (149 aa)). Residues Cys336 and Cys337 are each lipidated (S-palmitoyl cysteine). The segment at 344–464 (VEDDKDAETE…QGVDNQAYQA (121 aa)) is disordered. Over residues 367 to 401 (AAQMKEMMAMMQKMQQQQAAYPPQGAYPPQGGYPP) the composition is skewed to low complexity. Composition is skewed to pro residues over residues 416–425 (QGYPPPPQGY) and 434–452 (QGYPPPQGAPPQGAPPQAA).

The protein belongs to the G-protein coupled receptor 1 family. Opsin subfamily. In terms of processing, contains one covalently linked retinal chromophore. Upon light absorption, the covalently bound 11-cis-retinal is converted to all-trans-retinal. After hydrolysis of the Schiff base and release of the covalently bound all-trans-retinal, active rhodopsin is regenerated by binding of a fresh molecule of 11-cis-retinal.

The protein localises to the cell projection. It localises to the rhabdomere membrane. Photoreceptor required for image-forming vision at low light intensity. Light-induced isomerization of 11-cis to all-trans retinal triggers a conformational change that activates signaling via G-proteins. Signaling mediates the activation of phospholipase C. Subsequent receptor phosphorylation mediates displacement of the bound G-protein alpha subunit by arrestin and terminates signaling. The protein is Rhodopsin (RHO) of Sepia officinalis (Common cuttlefish).